The following is a 194-amino-acid chain: High mobility group protein B4 (194 aa).

2 DNA-binding regions (HMG box) span residues 9–79 (PKAN…MNYF) and 93–161 (PRRP…SVYR).

This sequence belongs to the HMGB family.

The protein localises to the nucleus. Its subcellular location is the chromosome. The protein is High mobility group protein B4 (HMGB4) of Bos taurus (Bovine).